Consider the following 284-residue polypeptide: L-ribulose-5-phosphate 3-epimerase UlaE (284 aa).

Belongs to the L-ribulose-5-phosphate 3-epimerase family.

It carries out the reaction L-ribulose 5-phosphate = L-xylulose 5-phosphate. The protein operates within cofactor degradation; L-ascorbate degradation; D-xylulose 5-phosphate from L-ascorbate: step 3/4. Functionally, catalyzes the isomerization of L-xylulose-5-phosphate to L-ribulose-5-phosphate. Is involved in the anaerobic L-ascorbate utilization. The protein is L-ribulose-5-phosphate 3-epimerase UlaE of Shigella sonnei (strain Ss046).